The chain runs to 176 residues: Large ribosomal subunit protein uL6 (176 aa).

This sequence belongs to the universal ribosomal protein uL6 family. Part of the 50S ribosomal subunit.

Its function is as follows. This protein binds to the 23S rRNA, and is important in its secondary structure. It is located near the subunit interface in the base of the L7/L12 stalk, and near the tRNA binding site of the peptidyltransferase center. This is Large ribosomal subunit protein uL6 from Paraburkholderia xenovorans (strain LB400).